A 427-amino-acid polypeptide reads, in one-letter code: Glutamate-1-semialdehyde 2,1-aminomutase 1 (427 aa).

Residue lysine 267 is modified to N6-(pyridoxal phosphate)lysine.

This sequence belongs to the class-III pyridoxal-phosphate-dependent aminotransferase family. HemL subfamily. Homodimer. Requires pyridoxal 5'-phosphate as cofactor.

Its subcellular location is the cytoplasm. The catalysed reaction is (S)-4-amino-5-oxopentanoate = 5-aminolevulinate. Its pathway is porphyrin-containing compound metabolism; protoporphyrin-IX biosynthesis; 5-aminolevulinate from L-glutamyl-tRNA(Glu): step 2/2. The chain is Glutamate-1-semialdehyde 2,1-aminomutase 1 from Staphylococcus epidermidis (strain ATCC 35984 / DSM 28319 / BCRC 17069 / CCUG 31568 / BM 3577 / RP62A).